The chain runs to 81 residues: Photosystem I iron-sulfur center (81 aa).

4Fe-4S ferredoxin-type domains follow at residues 2 to 31 (SHSV…MVPW) and 39 to 68 (IAAS…IRVY). Residues Cys-11, Cys-14, Cys-17, Cys-21, Cys-48, Cys-51, Cys-54, and Cys-58 each coordinate [4Fe-4S] cluster.

In terms of assembly, the cyanobacterial PSI reaction center is composed of one copy each of PsaA,B,C,D,E,F,I,J,K,L,M and X, and forms trimeric complexes. [4Fe-4S] cluster serves as cofactor.

It is found in the cellular thylakoid membrane. It catalyses the reaction reduced [plastocyanin] + hnu + oxidized [2Fe-2S]-[ferredoxin] = oxidized [plastocyanin] + reduced [2Fe-2S]-[ferredoxin]. Functionally, apoprotein for the two 4Fe-4S centers FA and FB of photosystem I (PSI); essential for photochemical activity. FB is the terminal electron acceptor of PSI, donating electrons to ferredoxin. The C-terminus interacts with PsaA/B/D and helps assemble the protein into the PSI complex. Required for binding of PsaD and PsaE to PSI. PSI is a plastocyanin/cytochrome c6-ferredoxin oxidoreductase, converting photonic excitation into a charge separation, which transfers an electron from the donor P700 chlorophyll pair to the spectroscopically characterized acceptors A0, A1, FX, FA and FB in turn. In Synechococcus elongatus (strain ATCC 33912 / PCC 7942 / FACHB-805) (Anacystis nidulans R2), this protein is Photosystem I iron-sulfur center.